We begin with the raw amino-acid sequence, 310 residues long: Collagen-like protein V6 (310 aa).

Over residues 1–41 (MSLSTLFSPNTYNINSKSQTLNNLPSNPTSQTNTLWSNNAY) the composition is skewed to polar residues. Positions 1-183 (MSLSTLFSPN…GDPGAKGDPG (183 aa)) are disordered. Collagen-like domains lie at 61–119 (GQKG…KGQA) and 123–182 (GLKG…KGDP). Positions 92–101 (SGDKGDKGDS) are enriched in basic and acidic residues. N-linked (GlcNAc...) asparagine; by host glycans are attached at residues Asn-227 and Asn-264.

Belongs to the sputnik virus V6 family.

The protein is Collagen-like protein V6 of Sputnik virophage.